The primary structure comprises 148 residues: MKIYVDADACPVVSIVERVAQEMKIPVTLLCDTNHILNSTYSDIKIIGAGADAVDFALINLCHRGDVVVTQDYGVAAMALGKGAYAIHQSGKLYENDNIDRMLMERHIAKKARRASSKNHMKGPRKRTSEDDERFEAAFRRLIMRGKV.

The protein belongs to the UPF0178 family.

The sequence is that of UPF0178 protein CA_C2825 from Clostridium acetobutylicum (strain ATCC 824 / DSM 792 / JCM 1419 / IAM 19013 / LMG 5710 / NBRC 13948 / NRRL B-527 / VKM B-1787 / 2291 / W).